A 306-amino-acid chain; its full sequence is Homoserine kinase (306 aa).

95–105 is a binding site for ATP; the sequence is PQSRGLGSSAA.

This sequence belongs to the GHMP kinase family. Homoserine kinase subfamily.

It localises to the cytoplasm. The catalysed reaction is L-homoserine + ATP = O-phospho-L-homoserine + ADP + H(+). It participates in amino-acid biosynthesis; L-threonine biosynthesis; L-threonine from L-aspartate: step 4/5. Its function is as follows. Catalyzes the ATP-dependent phosphorylation of L-homoserine to L-homoserine phosphate. In Corynebacterium urealyticum (strain ATCC 43042 / DSM 7109), this protein is Homoserine kinase.